The following is a 408-amino-acid chain: tRNA wybutosine-synthesizing protein 2 homolog (408 aa).

S-adenosyl-L-methionine-binding positions include S201, K208, E248, and 276–277; that span reads DN.

This sequence belongs to the class I-like SAM-binding methyltransferase superfamily. TRM5/TYW2 family.

It carries out the reaction 4-demethylwyosine(37) in tRNA(Phe) + S-adenosyl-L-methionine = 4-demethyl-7-[(3S)-3-amino-3-carboxypropyl]wyosine(37) in tRNA(Phe) + S-methyl-5'-thioadenosine + H(+). It functions in the pathway tRNA modification; wybutosine-tRNA(Phe) biosynthesis. Functionally, S-adenosyl-L-methionine-dependent transferase that acts as a component of the wybutosine biosynthesis pathway. Wybutosine is a hyper modified guanosine with a tricyclic base found at the 3'-position adjacent to the anticodon of eukaryotic phenylalanine tRNA. Catalyzes the transfer of the alpha-amino-alpha-carboxypropyl (acp) group from S-adenosyl-L-methionine to the C-7 position of 4-demethylwyosine (imG-14) to produce wybutosine-86. This Danio rerio (Zebrafish) protein is tRNA wybutosine-synthesizing protein 2 homolog (trmt12).